The primary structure comprises 402 residues: 4-hydroxy-3-methylbut-2-enyl diphosphate reductase (402 aa).

Position 66 (cysteine 66) interacts with [4Fe-4S] cluster. Histidine 96 contributes to the (2E)-4-hydroxy-3-methylbut-2-enyl diphosphate binding site. Histidine 96 lines the dimethylallyl diphosphate pocket. Histidine 96 lines the isopentenyl diphosphate pocket. Cysteine 157 is a [4Fe-4S] cluster binding site. Histidine 185 is a binding site for (2E)-4-hydroxy-3-methylbut-2-enyl diphosphate. Histidine 185 is a dimethylallyl diphosphate binding site. Isopentenyl diphosphate is bound at residue histidine 185. Residue glutamate 187 is the Proton donor of the active site. Position 250 (threonine 250) interacts with (2E)-4-hydroxy-3-methylbut-2-enyl diphosphate. [4Fe-4S] cluster is bound at residue cysteine 288. (2E)-4-hydroxy-3-methylbut-2-enyl diphosphate is bound by residues serine 317, serine 318, asparagine 319, and serine 379. Serine 317, serine 318, asparagine 319, and serine 379 together coordinate dimethylallyl diphosphate. Isopentenyl diphosphate is bound by residues serine 317, serine 318, asparagine 319, and serine 379.

Belongs to the IspH family. [4Fe-4S] cluster is required as a cofactor.

The enzyme catalyses isopentenyl diphosphate + 2 oxidized [2Fe-2S]-[ferredoxin] + H2O = (2E)-4-hydroxy-3-methylbut-2-enyl diphosphate + 2 reduced [2Fe-2S]-[ferredoxin] + 2 H(+). The catalysed reaction is dimethylallyl diphosphate + 2 oxidized [2Fe-2S]-[ferredoxin] + H2O = (2E)-4-hydroxy-3-methylbut-2-enyl diphosphate + 2 reduced [2Fe-2S]-[ferredoxin] + 2 H(+). It functions in the pathway isoprenoid biosynthesis; dimethylallyl diphosphate biosynthesis; dimethylallyl diphosphate from (2E)-4-hydroxy-3-methylbutenyl diphosphate: step 1/1. The protein operates within isoprenoid biosynthesis; isopentenyl diphosphate biosynthesis via DXP pathway; isopentenyl diphosphate from 1-deoxy-D-xylulose 5-phosphate: step 6/6. Its function is as follows. Catalyzes the conversion of 1-hydroxy-2-methyl-2-(E)-butenyl 4-diphosphate (HMBPP) into a mixture of isopentenyl diphosphate (IPP) and dimethylallyl diphosphate (DMAPP). Acts in the terminal step of the DOXP/MEP pathway for isoprenoid precursor biosynthesis. This chain is 4-hydroxy-3-methylbut-2-enyl diphosphate reductase, found in Thermosynechococcus vestitus (strain NIES-2133 / IAM M-273 / BP-1).